The sequence spans 512 residues: Cytochrome P450 monooxygenase TwmD (512 aa).

C454 is a binding site for heme.

It belongs to the cytochrome P450 family. Heme serves as cofactor.

The protein operates within secondary metabolite biosynthesis. Its function is as follows. Cytochrome P450 monooxygenase; part of the gene cluster that mediates the biosynthesis of wortmanamides A and B, reduced long-chain polyketides amidated with a specific omega-amino acid, 5-aminopentanoic acid (5PA). The PKS modules of TwmB are involved in the synthesis of the polyketide backbone, whereas the non-canonical C domain of TwmB is a bonafide condensation domain that specifically selects 5PA and catalyzes amidation to release polyketide chain. The C domain clearly prefers C16 and C18 fatty acyl substrates, which is consistent with simultaneous formation of both octaketide and nonaketide acyl amides wortmanamides A and B. Because TwmB lacks a designated enoylreductase (ER) domain, the required activity is provided the enoyl reductase TwmE. The roles of the remaining enzymes have still to be clarified. This chain is Cytochrome P450 monooxygenase TwmD, found in Talaromyces wortmannii (Penicillium wortmannii).